Consider the following 606-residue polypeptide: Gastrula zinc finger protein XlCGF66.1 (606 aa).

2 disordered regions span residues 1-31 and 240-271; these read MGMW…RGKK and TLHS…KRQK. Over residues 242–262 the composition is skewed to basic and acidic residues; the sequence is HSKDSCNEGHKHLSHKSDYNK. C2H2-type zinc fingers lie at residues 273 to 295, 300 to 322, 328 to 350, 384 to 407, 413 to 435, 441 to 464, 470 to 492, 498 to 521, 527 to 549, 555 to 578, and 584 to 606; these read FSCS…QKTH, LLCL…RQTH, FSCS…QITH, DFCS…QQVH, FSCT…QRTH, YSCS…QQVH, FFCS…QRTH, FSCS…QRTH, DFCF…QQVH, and FSCS…HRTH.

The protein belongs to the krueppel C2H2-type zinc-finger protein family.

The protein localises to the nucleus. Functionally, may be involved in transcriptional regulation. This is Gastrula zinc finger protein XlCGF66.1 from Xenopus laevis (African clawed frog).